A 146-amino-acid chain; its full sequence is 3-dehydroquinate dehydratase (146 aa).

The active-site Proton acceptor is the Tyr-23. Residues Asn-75, His-81, and Asp-88 each coordinate substrate. The active-site Proton donor is the His-101. Substrate is bound by residues 102–103 and Arg-112; that span reads LS.

The protein belongs to the type-II 3-dehydroquinase family. As to quaternary structure, homododecamer.

It carries out the reaction 3-dehydroquinate = 3-dehydroshikimate + H2O. The protein operates within metabolic intermediate biosynthesis; chorismate biosynthesis; chorismate from D-erythrose 4-phosphate and phosphoenolpyruvate: step 3/7. Functionally, catalyzes a trans-dehydration via an enolate intermediate. The protein is 3-dehydroquinate dehydratase of Marinobacter nauticus (strain ATCC 700491 / DSM 11845 / VT8) (Marinobacter aquaeolei).